The following is an 873-amino-acid chain: Probable beta-glucosidase A (873 aa).

A signal peptide spans 1–19 (MRFGWLEVAALTAASVANA). N71, N222, and N263 each carry an N-linked (GlcNAc...) asparagine glycan. The active site involves D291. N-linked (GlcNAc...) asparagine glycans are attached at residues N326, N333, N365, N453, N534, N553, N575, N679, and N725. A disordered region spans residues 731 to 764 (DSSDDPNYGWQDSEYIPEGARDGSPQPLLKAGGA).

This sequence belongs to the glycosyl hydrolase 3 family.

It is found in the secreted. It carries out the reaction Hydrolysis of terminal, non-reducing beta-D-glucosyl residues with release of beta-D-glucose.. The protein operates within glycan metabolism; cellulose degradation. Functionally, beta-glucosidases are one of a number of cellulolytic enzymes involved in the degradation of cellulosic biomass. Catalyzes the last step releasing glucose from the inhibitory cellobiose. The polypeptide is Probable beta-glucosidase A (bglA) (Aspergillus fumigatus (strain ATCC MYA-4609 / CBS 101355 / FGSC A1100 / Af293) (Neosartorya fumigata)).